The primary structure comprises 354 residues: Uroporphyrinogen decarboxylase (354 aa).

Substrate-binding positions include Arg27–Arg31, Asp77, Tyr154, Ser209, and His327.

Belongs to the uroporphyrinogen decarboxylase family. In terms of assembly, homodimer.

It is found in the cytoplasm. It carries out the reaction uroporphyrinogen III + 4 H(+) = coproporphyrinogen III + 4 CO2. It participates in porphyrin-containing compound metabolism; protoporphyrin-IX biosynthesis; coproporphyrinogen-III from 5-aminolevulinate: step 4/4. Catalyzes the decarboxylation of four acetate groups of uroporphyrinogen-III to yield coproporphyrinogen-III. The polypeptide is Uroporphyrinogen decarboxylase (Shewanella halifaxensis (strain HAW-EB4)).